Reading from the N-terminus, the 136-residue chain is MAKHPEVSLYKELTDIQRHVTQNAGTEPPFSGKLLHNKKSGVYHCLCCEQPLFMSGTKFDSGCGWPSFYQPATHDAVQYLDDDSHNMHRIEVRCGHCNAHLGHVFPDGPQPTGERFCINSAALSFTDENTGEKTVG.

One can recognise a MsrB domain in the interval 6–128 (EVSLYKELTD…NSAALSFTDE (123 aa)). Zn(2+) is bound by residues Cys45, Cys48, Cys94, and Cys97. The Nucleophile role is filled by Cys117.

This sequence belongs to the MsrB Met sulfoxide reductase family. Zn(2+) serves as cofactor.

It carries out the reaction L-methionyl-[protein] + [thioredoxin]-disulfide + H2O = L-methionyl-(R)-S-oxide-[protein] + [thioredoxin]-dithiol. This chain is Peptide methionine sulfoxide reductase MsrB, found in Photorhabdus laumondii subsp. laumondii (strain DSM 15139 / CIP 105565 / TT01) (Photorhabdus luminescens subsp. laumondii).